Reading from the N-terminus, the 297-residue chain is 4-hydroxy-tetrahydrodipicolinate synthase (297 aa).

Residue Thr-47 participates in pyruvate binding. Residue Tyr-135 is the Proton donor/acceptor of the active site. Lys-163 functions as the Schiff-base intermediate with substrate in the catalytic mechanism. Ile-205 is a pyruvate binding site.

Belongs to the DapA family. Homotetramer; dimer of dimers.

It is found in the cytoplasm. It carries out the reaction L-aspartate 4-semialdehyde + pyruvate = (2S,4S)-4-hydroxy-2,3,4,5-tetrahydrodipicolinate + H2O + H(+). It functions in the pathway amino-acid biosynthesis; L-lysine biosynthesis via DAP pathway; (S)-tetrahydrodipicolinate from L-aspartate: step 3/4. In terms of biological role, catalyzes the condensation of (S)-aspartate-beta-semialdehyde [(S)-ASA] and pyruvate to 4-hydroxy-tetrahydrodipicolinate (HTPA). The chain is 4-hydroxy-tetrahydrodipicolinate synthase from Cytophaga hutchinsonii (strain ATCC 33406 / DSM 1761 / CIP 103989 / NBRC 15051 / NCIMB 9469 / D465).